A 523-amino-acid polypeptide reads, in one-letter code: Leucine-rich repeat-containing protein 27 (523 aa).

Positions 1 to 26 (MEDTSPQAVAEKAAKDPKAAKDLKDD) are disordered. The segment covering 12–26 (KAAKDPKAAKDLKDD) has biased composition (basic and acidic residues). LRR repeat units follow at residues 55-76 (SSPV…FKIP), 77-98 (NLQQ…FFQL), 101-122 (NLTW…IGSH), 124-145 (HLKT…LGQV), and 147-168 (TLTA…IVQK). 2 disordered regions span residues 206–236 (QYPV…ADFF) and 372–394 (REQT…HSNM). Composition is skewed to basic and acidic residues over residues 227 to 236 (DQEKEKADFF) and 372 to 385 (REQT…RELS). Coiled coils occupy residues 335–374 (VHAN…WREQ) and 463–494 (MQDI…TLNK). Positions 503–523 (GNLSLHPPASQPQNIFFNTKS) are disordered. Over residues 513-523 (QPQNIFFNTKS) the composition is skewed to polar residues.

The protein is Leucine-rich repeat-containing protein 27 (Lrrc27) of Mus musculus (Mouse).